The sequence spans 319 residues: Cytochrome c biogenesis protein CcsA (319 aa).

Helical transmembrane passes span 14–34 (AFAV…FPQW), 46–66 (AIAN…GGYF), 74–94 (SLFF…SISG), 97–117 (LVGV…ALSL), and 142–162 (VMML…ALLV). Residues 175 to 201 (SVGTGSFRSRRPEPSLEASTGNGGTTV) form a disordered region. Residues 191 to 201 (EASTGNGGTTV) show a composition bias toward polar residues. Helical transmembrane passes span 227–247 (MIGL…VWAN), 254–274 (WSWD…AAYL), and 288–308 (AILA…VNLL).

The protein belongs to the CcmF/CycK/Ccl1/NrfE/CcsA family. In terms of assembly, may interact with ccs1.

It localises to the cellular thylakoid membrane. Required during biogenesis of c-type cytochromes (cytochrome c6 and cytochrome f) at the step of heme attachment. The chain is Cytochrome c biogenesis protein CcsA from Thermosynechococcus vestitus (strain NIES-2133 / IAM M-273 / BP-1).